We begin with the raw amino-acid sequence, 85 residues long: Putative membrane protein insertion efficiency factor (85 aa).

This sequence belongs to the UPF0161 family.

It is found in the cell inner membrane. In terms of biological role, could be involved in insertion of integral membrane proteins into the membrane. This Vibrio cholerae serotype O1 (strain ATCC 39315 / El Tor Inaba N16961) protein is Putative membrane protein insertion efficiency factor.